A 552-amino-acid chain; its full sequence is Probable protein kinase UbiB (552 aa).

Residues 121–504 (HFDTVPLASA…QGLQRRVVNA (384 aa)) form the Protein kinase domain. Residues 127–135 (LASASISQV) and Lys149 each bind ATP. Asp284 serves as the catalytic Proton acceptor. The next 2 helical transmembrane spans lie at 501–521 (VVNA…YGLH) and 530–550 (IPVW…SAWW).

It belongs to the ABC1 family. UbiB subfamily.

The protein resides in the cell inner membrane. It participates in cofactor biosynthesis; ubiquinone biosynthesis [regulation]. In terms of biological role, is probably a protein kinase regulator of UbiI activity which is involved in aerobic coenzyme Q (ubiquinone) biosynthesis. The chain is Probable protein kinase UbiB from Xylella fastidiosa (strain M12).